The chain runs to 315 residues: tRNA dimethylallyltransferase (315 aa).

10–17 serves as a coordination point for ATP; that stretch reads GPTASGKS. Residue 12–17 participates in substrate binding; sequence TASGKS. The tract at residues 35-38 is interaction with substrate tRNA; the sequence is DSMQ.

The protein belongs to the IPP transferase family. In terms of assembly, monomer. It depends on Mg(2+) as a cofactor.

It carries out the reaction adenosine(37) in tRNA + dimethylallyl diphosphate = N(6)-dimethylallyladenosine(37) in tRNA + diphosphate. Catalyzes the transfer of a dimethylallyl group onto the adenine at position 37 in tRNAs that read codons beginning with uridine, leading to the formation of N6-(dimethylallyl)adenosine (i(6)A). This Thermoanaerobacter pseudethanolicus (strain ATCC 33223 / 39E) (Clostridium thermohydrosulfuricum) protein is tRNA dimethylallyltransferase.